The primary structure comprises 212 residues: Nitric oxide synthase (212 aa).

Tyr-11 serves as a coordination point for heme b. Residues 30-50 are calmodulin-binding; that stretch reads KKRAIGFKKLAKAVKFSTKLM. One can recognise a Flavodoxin-like domain in the interval 60–212; it reads ATILYATETG…AVDTLLEELG (153 aa). The disordered stretch occupies residues 155-175; sequence SYSDSRKSSSDEPEHKDNFES. Basic and acidic residues predominate over residues 158–173; sequence DSRKSSSDEPEHKDNF. Residue 186–212 participates in FMN binding; it reads AFGLGSRAYPHFCAFARAVDTLLEELG.

It belongs to the NOS family. Requires heme b as cofactor. FAD serves as cofactor. FMN is required as a cofactor.

It carries out the reaction 2 L-arginine + 3 NADPH + 4 O2 + H(+) = 2 L-citrulline + 2 nitric oxide + 3 NADP(+) + 4 H2O. Its function is as follows. Produces nitric oxide (NO) which is a messenger molecule with diverse functions throughout the body. The polypeptide is Nitric oxide synthase (Squalus acanthias (Spiny dogfish)).